We begin with the raw amino-acid sequence, 1400 residues long: DNA-directed RNA polymerase subunit beta' (1400 aa).

Zn(2+) is bound by residues Cys70, Cys72, Cys85, and Cys88. The Mg(2+) site is built by Asp460, Asp462, and Asp464. Residues Cys814, Cys888, Cys895, and Cys898 each contribute to the Zn(2+) site.

The protein belongs to the RNA polymerase beta' chain family. As to quaternary structure, the RNAP catalytic core consists of 2 alpha, 1 beta, 1 beta' and 1 omega subunit. When a sigma factor is associated with the core the holoenzyme is formed, which can initiate transcription. The cofactor is Mg(2+). Zn(2+) serves as cofactor.

The enzyme catalyses RNA(n) + a ribonucleoside 5'-triphosphate = RNA(n+1) + diphosphate. Its function is as follows. DNA-dependent RNA polymerase catalyzes the transcription of DNA into RNA using the four ribonucleoside triphosphates as substrates. The protein is DNA-directed RNA polymerase subunit beta' of Vibrio vulnificus (strain CMCP6).